Consider the following 237-residue polypeptide: 2,3,4,5-tetrahydropyridine-2,6-dicarboxylate N-acetyltransferase (237 aa).

This sequence belongs to the transferase hexapeptide repeat family. DapH subfamily.

It carries out the reaction (S)-2,3,4,5-tetrahydrodipicolinate + acetyl-CoA + H2O = L-2-acetamido-6-oxoheptanedioate + CoA. It participates in amino-acid biosynthesis; L-lysine biosynthesis via DAP pathway; LL-2,6-diaminopimelate from (S)-tetrahydrodipicolinate (acetylase route): step 1/3. Its function is as follows. Catalyzes the transfer of an acetyl group from acetyl-CoA to tetrahydrodipicolinate. The protein is 2,3,4,5-tetrahydropyridine-2,6-dicarboxylate N-acetyltransferase of Limosilactobacillus fermentum (strain NBRC 3956 / LMG 18251) (Lactobacillus fermentum).